Here is a 573-residue protein sequence, read N- to C-terminus: F-box/WD repeat-containing protein 5 (573 aa).

An F-box domain is found at 3-49 (EGGLPLLPDSLVYQIFLSLGPADVLAAGLVCRQWQAVSRDEFLWKEQ). The stretch at 90-129 (EHTDQVLHLSFSHSGYQFASCSKDCTVKIWNNDLTISLLH) is one WD 1 repeat. Phosphoserine; by PLK4 is present on S151. A D-box motif is present at residues 308–316 (RRVFDSVLD). WD repeat units follow at residues 470–509 (TPND…CLAK) and 511–551 (RHED…RVLQ).

This sequence belongs to the FBXW5 family. Part of the SCF (SKP1-CUL1-F-box) E3 ubiquitin-protein ligase complex SCF(FBXW5) composed of CUL1, SKP1, RBX1 and FBXW5. Component of the DCX(FBXW5) E3 ubiquitin ligase complex, at least composed of (CUL4A or CUL4B), DDB1, FBXW5 and RBX1. Interacts with CDC20, TSC1, TSC2 and SASS6. Interacts with EPS8. Interacts with TNFAIP8L1; TNFAIP8L1 competes with TSC2 to bind FBXW5 increasing TSC2 stability by preventing its ubiquitination. In terms of processing, phosphorylated at Ser-151 by PLK4 during the G1/S transition, leading to inhibit its ability to ubiquitinate SASS6. Post-translationally, ubiquitinated and degraded by the APC/C complex during mitosis and G1 phase. Widely expressed in adult and embryonal tissues.

It is found in the cytoplasm. It functions in the pathway protein modification; protein ubiquitination. In terms of biological role, substrate recognition component of both SCF (SKP1-CUL1-F-box protein) and DCX (DDB1-CUL4-X-box) E3 ubiquitin-protein ligase complexes. Substrate-specific adapter of the DCX(FBXW5) E3 ubiquitin-protein ligase complex which mediates the polyubiquitination and subsequent degradation of TSC2. May also act as a negative regulator of MAP3K7/TAK1 signaling in the interleukin-1B (IL1B) signaling pathway. Substrate recognition component of the SCF(FBXW5) E3 ubiquitin-protein ligase complex which mediates the ubiquitination and subsequent proteasomal degradation of SASS6 during S phase, leading to prevent centriole reduplication. The SCF(FBXW5) complex also mediates ubiquitination and degradation of actin-regulator EPS8 during G2 phase, leading to the transient degradation of EPS8 and subsequent cell shape changes required to allow mitotic progression. This Mus musculus (Mouse) protein is F-box/WD repeat-containing protein 5 (Fbxw5).